The chain runs to 259 residues: Glycerol-3-phosphate acyltransferase (259 aa).

A run of 7 helical transmembrane segments spans residues 11–31, 62–82, 93–112, 124–144, 152–172, 188–208, and 211–231; these read IILA…IIIV, LVVA…AILL, TSYF…PIYY, LGLL…VWFI, VSVA…IPYL, FSVA…HYWF, and IWAS…LILG.

The protein belongs to the PlsY family. As to quaternary structure, probably interacts with PlsX.

The protein localises to the cell membrane. The catalysed reaction is an acyl phosphate + sn-glycerol 3-phosphate = a 1-acyl-sn-glycero-3-phosphate + phosphate. Its pathway is lipid metabolism; phospholipid metabolism. Catalyzes the transfer of an acyl group from acyl-phosphate (acyl-PO(4)) to glycerol-3-phosphate (G3P) to form lysophosphatidic acid (LPA). This enzyme utilizes acyl-phosphate as fatty acyl donor, but not acyl-CoA or acyl-ACP. The chain is Glycerol-3-phosphate acyltransferase from Mycoplasma capricolum subsp. capricolum (strain California kid / ATCC 27343 / NCTC 10154).